The primary structure comprises 337 residues: Putative NAC domain-containing protein 94 (337 aa).

Positions 20-191 constitute an NAC domain; that stretch reads VLPGFRFHPT…AWAICRIFKK (172 aa).

The protein resides in the nucleus. This chain is Putative NAC domain-containing protein 94 (ANAC094), found in Arabidopsis thaliana (Mouse-ear cress).